Reading from the N-terminus, the 43-residue chain is uncharacterized protein (43 aa).

An N-terminal signal peptide occupies residues 1 to 22; it reads MKRKIIAIGIFFRLFIIHIHFS.

This is an uncharacterized protein from Schizosaccharomyces pombe (strain 972 / ATCC 24843) (Fission yeast).